The sequence spans 932 residues: Transcriptional regulatory protein DagR (932 aa).

One can recognise a Sigma-54 factor interaction domain in the interval 111–343 (LIGYDRSLRD…LKSDIQFLCA (233 aa)). ATP contacts are provided by residues 141 to 148 (GPSGVGKT) and 210 to 219 (ADGGYLLLDE). Positions 462–567 (RYGDQIEERV…KECRHYRQRI (106 aa)) constitute a PRD 1 domain. Histidine 497 carries the phosphohistidine modification. The PTS EIIA type-4 domain maps to 572-708 (DCGVILIAHG…PQQENGGKVL (137 aa)). Residue histidine 580 is the Tele-phosphohistidine intermediate of the active site. A PRD 2 domain is found at 835-932 (LNPQRILKEM…YFYIYELLYS (98 aa)). At histidine 870 the chain carries Phosphohistidine.

In terms of biological role, involved in the regulation of the catabolism of D-glucosaminate. This Salmonella typhimurium (strain 14028s / SGSC 2262) protein is Transcriptional regulatory protein DagR (dgaR).